The chain runs to 399 residues: Elongation factor Tu (399 aa).

The region spanning Lys-10 to Glu-204 is the tr-type G domain. Residues Gly-19–Thr-26 form a G1 region. Residue Gly-19 to Thr-26 participates in GTP binding. Thr-26 is a binding site for Mg(2+). The G2 stretch occupies residues Gly-60–Asn-64. The segment at Asp-81–Gly-84 is G3. GTP is bound by residues Asp-81–His-85 and Asn-136–Asp-139. The G4 stretch occupies residues Asn-136–Asp-139. Residues Ser-174–Leu-176 form a G5 region.

The protein belongs to the TRAFAC class translation factor GTPase superfamily. Classic translation factor GTPase family. EF-Tu/EF-1A subfamily. In terms of assembly, monomer.

It localises to the cytoplasm. It catalyses the reaction GTP + H2O = GDP + phosphate + H(+). Functionally, GTP hydrolase that promotes the GTP-dependent binding of aminoacyl-tRNA to the A-site of ribosomes during protein biosynthesis. This Prochlorococcus marinus (strain MIT 9215) protein is Elongation factor Tu.